A 526-amino-acid chain; its full sequence is Bifunctional purine biosynthesis protein PurH (526 aa).

An MGS-like domain is found at 1–147 (MPSIKRALIS…KNWKHVAIVT (147 aa)).

Belongs to the PurH family.

It catalyses the reaction (6R)-10-formyltetrahydrofolate + 5-amino-1-(5-phospho-beta-D-ribosyl)imidazole-4-carboxamide = 5-formamido-1-(5-phospho-D-ribosyl)imidazole-4-carboxamide + (6S)-5,6,7,8-tetrahydrofolate. It carries out the reaction IMP + H2O = 5-formamido-1-(5-phospho-D-ribosyl)imidazole-4-carboxamide. The protein operates within purine metabolism; IMP biosynthesis via de novo pathway; 5-formamido-1-(5-phospho-D-ribosyl)imidazole-4-carboxamide from 5-amino-1-(5-phospho-D-ribosyl)imidazole-4-carboxamide (10-formyl THF route): step 1/1. It participates in purine metabolism; IMP biosynthesis via de novo pathway; IMP from 5-formamido-1-(5-phospho-D-ribosyl)imidazole-4-carboxamide: step 1/1. The sequence is that of Bifunctional purine biosynthesis protein PurH from Neisseria meningitidis serogroup C / serotype 2a (strain ATCC 700532 / DSM 15464 / FAM18).